The sequence spans 99 residues: uncharacterized protein (99 aa).

The TM2 domain maps to 32-79 (KKSVGIAVLLSFIIPGAGQMYLGRVGKGIILLLTCWLIIPWIYSIYDA). 2 helical membrane-spanning segments follow: residues 34–54 (SVGIAVLLSFIIPGAGQMYLG) and 56–76 (VGKGIILLLTCWLIIPWIYSI).

It is found in the cell membrane. This is an uncharacterized protein from Methanocaldococcus jannaschii (strain ATCC 43067 / DSM 2661 / JAL-1 / JCM 10045 / NBRC 100440) (Methanococcus jannaschii).